Consider the following 287-residue polypeptide: Co-chaperone protein DjlA (287 aa).

The Periplasmic portion of the chain corresponds to 1–6 (MQIFGK). Residues 7-30 (ILGAFFGFLFGGVFGALFGLFIGH) traverse the membrane as a helical segment. Over 31–287 (QFDKARRLSQ…DLIKKEKGFK (257 aa)) the chain is Cytoplasmic. Residues 192–213 (GGFGGQQHQSHHSSSHGGWQQA) form a disordered region. The region spanning 221-287 (DAYKILGIDA…DLIKKEKGFK (67 aa)) is the J domain.

As to quaternary structure, homodimer.

The protein localises to the cell inner membrane. Regulatory DnaK co-chaperone. Direct interaction between DnaK and DjlA is needed for the induction of the wcaABCDE operon, involved in the synthesis of a colanic acid polysaccharide capsule, possibly through activation of the RcsB/RcsC phosphotransfer signaling pathway. The colanic acid capsule may help the bacterium survive conditions outside the host. This Vibrio vulnificus (strain CMCP6) protein is Co-chaperone protein DjlA.